The primary structure comprises 245 residues: tRNA pseudouridine synthase A 2 (245 aa).

Residue D53 is the Nucleophile of the active site. Residue Y111 participates in substrate binding.

This sequence belongs to the tRNA pseudouridine synthase TruA family. Homodimer.

The enzyme catalyses uridine(38/39/40) in tRNA = pseudouridine(38/39/40) in tRNA. In terms of biological role, formation of pseudouridine at positions 38, 39 and 40 in the anticodon stem and loop of transfer RNAs. This is tRNA pseudouridine synthase A 2 from Bacillus anthracis.